A 466-amino-acid polypeptide reads, in one-letter code: Coagulation factor VII (466 aa).

The first 20 residues, 1–20, serve as a signal peptide directing secretion; that stretch reads MVSQALRLLCLLLGLQGCLA. Positions 21 to 60 are excised as a propeptide; that stretch reads AGGVAEASGGETRDXXWKPGPHRVFITQEEAHGVLHRRRR. In terms of domain architecture, Gla spans 61-105; the sequence is ANAFLEELRPGSLERECKEEQCSFEEAREIFKDLERTKLFWISYS. 4-carboxyglutamate is present on residues E66, E67, E74, E76, E79, E80, E85, E86, E89, and E95. C77 and C82 are oxidised to a cystine. The 37-residue stretch at 106-142 folds into the EGF-like 1; calcium-binding domain; it reads DGDQCASSPCQNGGSCKDQLQSYICFCLPAFEGRNCE. 10 disulfide bridges follow: C110/C121, C115/C130, C132/C141, C151/C162, C158/C172, C174/C187, C195/C322, C219/C224, C238/C254, and C370/C389. An O-linked (Glc...) serine; alternate glycan is attached at S112. S112 carries an O-linked (Xyl...) serine; alternate glycan. A glycan (O-linked (Fuc) serine) is linked at S120. A (3R)-3-hydroxyaspartate modification is found at D123. In terms of domain architecture, EGF-like 2 spans 147-188; that stretch reads DQLICVNENGGCEQYCSDHTGTKRSCRCHEGYSLLADGVSCT. N205 is a glycosylation site (N-linked (GlcNAc...) asparagine). The 240-residue stretch at 213–452 folds into the Peptidase S1 domain; sequence IVGGKVCPKG…YIEWLQKLMR (240 aa). Active-site charge relay system residues include H253 and D302. An N-linked (GlcNAc...) asparagine glycan is attached at N382. D398 provides a ligand contact to substrate. C400 and C428 are oxidised to a cystine. S404 (charge relay system) is an active-site residue.

This sequence belongs to the peptidase S1 family. In terms of assembly, heterodimer of a light chain and a heavy chain linked by a disulfide bond. In terms of processing, the vitamin K-dependent, enzymatic carboxylation of some glutamate residues allows the modified protein to bind calcium. The iron and 2-oxoglutarate dependent 3-hydroxylation of aspartate and asparagine is (R) stereospecific within EGF domains. Post-translationally, O-glycosylated. O-fucosylated by POFUT1 on a conserved serine or threonine residue found in the consensus sequence C2-X(4,5)-[S/T]-C3 of EGF domains, where C2 and C3 are the second and third conserved cysteines. In terms of processing, can be either O-glucosylated or O-xylosylated at Ser-112 by POGLUT1.

Its subcellular location is the secreted. It carries out the reaction Selective cleavage of Arg-|-Ile bond in factor X to form factor Xa.. Functionally, initiates the extrinsic pathway of blood coagulation. Serine protease that circulates in the blood in a zymogen form. Factor VII is converted to factor VIIa by factor Xa, factor XIIa, factor IXa, or thrombin by minor proteolysis. In the presence of tissue factor and calcium ions, factor VIIa then converts factor X to factor Xa by limited proteolysis. Factor VIIa also converts factor IX to factor IXa in the presence of tissue factor and calcium. The protein is Coagulation factor VII (F7) of Pan troglodytes (Chimpanzee).